The primary structure comprises 540 residues: Chaperonin GroEL (540 aa).

ATP-binding positions include 29–32, 86–90, G413, and D493; these read TLGP and DGTTT. Residues 520–540 form a disordered region; the sequence is AEKPEPKPAPGPADPGAGMDF.

The protein belongs to the chaperonin (HSP60) family. In terms of assembly, forms a cylinder of 14 subunits composed of two heptameric rings stacked back-to-back. Interacts with the co-chaperonin GroES.

The protein localises to the cytoplasm. The catalysed reaction is ATP + H2O + a folded polypeptide = ADP + phosphate + an unfolded polypeptide.. In terms of biological role, together with its co-chaperonin GroES, plays an essential role in assisting protein folding. The GroEL-GroES system forms a nano-cage that allows encapsulation of the non-native substrate proteins and provides a physical environment optimized to promote and accelerate protein folding. The polypeptide is Chaperonin GroEL (Tropheryma whipplei (Whipple's bacillus)).